Consider the following 332-residue polypeptide: Anthranilate phosphoribosyltransferase (332 aa).

5-phospho-alpha-D-ribose 1-diphosphate-binding positions include Gly-80, 83 to 84 (GD), Thr-88, 90 to 93 (NLST), 108 to 116 (KHGNRSASG), and Ser-120. Gly-80 contributes to the anthranilate binding site. Residue Ser-92 participates in Mg(2+) binding. Position 111 (Asn-111) interacts with anthranilate. Position 166 (Arg-166) interacts with anthranilate. The Mg(2+) site is built by Asp-224 and Glu-225.

The protein belongs to the anthranilate phosphoribosyltransferase family. As to quaternary structure, homodimer. It depends on Mg(2+) as a cofactor.

The catalysed reaction is N-(5-phospho-beta-D-ribosyl)anthranilate + diphosphate = 5-phospho-alpha-D-ribose 1-diphosphate + anthranilate. The protein operates within amino-acid biosynthesis; L-tryptophan biosynthesis; L-tryptophan from chorismate: step 2/5. Its function is as follows. Catalyzes the transfer of the phosphoribosyl group of 5-phosphorylribose-1-pyrophosphate (PRPP) to anthranilate to yield N-(5'-phosphoribosyl)-anthranilate (PRA). In Pyrobaculum calidifontis (strain DSM 21063 / JCM 11548 / VA1), this protein is Anthranilate phosphoribosyltransferase.